Reading from the N-terminus, the 304-residue chain is Uricase (304 aa).

Residue A2 is modified to N-acetylalanine. K10 and K23 each carry N6-acetyllysine; alternate. Residues K10 and K23 each carry the N6-succinyllysine; alternate modification. The active-site Charge relay system is K23. 2 positions are modified to N6-acetyllysine: K27 and K36. Phosphoserine occurs at positions 39 and 63. Catalysis depends on T68, which acts as the Charge relay system. Urate contacts are provided by T68 and D69. Residues K118, K122, and K164 each carry the N6-acetyllysine modification. F170 serves as a coordination point for urate. Residues K175 and K185 each carry the N6-acetyllysine modification. Residue R187 coordinates urate. N6-acetyllysine; alternate occurs at positions 221 and 228. N6-succinyllysine; alternate is present on residues K221 and K228. The residue at position 232 (S232) is a Phosphoserine. 3 residues coordinate urate: V235, Q236, and N262. H264 serves as the catalytic Charge relay system. Position 278 is an N6-acetyllysine (K278). Phosphotyrosine is present on Y289. A Microbody targeting signal motif is present at residues S302–L304.

Belongs to the uricase family. Homotetramer.

It is found in the peroxisome. The catalysed reaction is urate + O2 + H2O = 5-hydroxyisourate + H2O2. It functions in the pathway purine metabolism; urate degradation; (S)-allantoin from urate: step 1/3. Functionally, catalyzes the oxidation of uric acid to 5-hydroxyisourate, which is further processed to form (S)-allantoin. This is Uricase (UOX) from Bos taurus (Bovine).